The following is a 945-amino-acid chain: Isoleucine--tRNA ligase (945 aa).

A 'HIGH' region motif is present at residues 66–76 (PYANGDIHLGH). L-isoleucyl-5'-AMP is bound at residue E581. A 'KMSKS' region motif is present at residues 622–626 (KMSKS). K625 contacts ATP. Residues C908, C911, C928, and C931 each contribute to the Zn(2+) site.

It belongs to the class-I aminoacyl-tRNA synthetase family. IleS type 1 subfamily. Monomer. It depends on Zn(2+) as a cofactor.

It is found in the cytoplasm. It catalyses the reaction tRNA(Ile) + L-isoleucine + ATP = L-isoleucyl-tRNA(Ile) + AMP + diphosphate. In terms of biological role, catalyzes the attachment of isoleucine to tRNA(Ile). As IleRS can inadvertently accommodate and process structurally similar amino acids such as valine, to avoid such errors it has two additional distinct tRNA(Ile)-dependent editing activities. One activity is designated as 'pretransfer' editing and involves the hydrolysis of activated Val-AMP. The other activity is designated 'posttransfer' editing and involves deacylation of mischarged Val-tRNA(Ile). This chain is Isoleucine--tRNA ligase, found in Burkholderia orbicola (strain MC0-3).